Here is a 435-residue protein sequence, read N- to C-terminus: Phospholipase A1 EG1, chloroplastic/mitochondrial (435 aa).

A chloroplast and mitochondrion-targeting transit peptide spans 1–31; it reads MTLPRQCAAACRTGGGGGGVVRCRAVAAAGG. A GXSXG motif is present at residues 264–268; that stretch reads GHSMG. Ser-266 serves as the catalytic Acyl-ester intermediate. Catalysis depends on charge relay system residues Asp-324 and His-371.

It belongs to the AB hydrolase superfamily. Lipase family.

It is found in the mitochondrion. The protein localises to the plastid. It localises to the chloroplast. It catalyses the reaction a 1,2-diacyl-sn-glycero-3-phosphocholine + H2O = a 2-acyl-sn-glycero-3-phosphocholine + a fatty acid + H(+). In terms of biological role, phospholipase that releases free fatty acids from phospholipids. Catalyzes the initial step of jasmonate (JA) biosynthesis. Required for the biosynthesis of endogenous JA in seedling, inflorescence and spikelets. Not essential for JA biosynthesis after wounding. Mediates spikelet development and specification of empty-glume identity. Functions in a high temperature-dependent manner to maintain floral developmental robustness under heat stress conditions. Functions by safeguarding the expression of several floral identity genes, such as MADS1, MADS6 and G1. The protein is Phospholipase A1 EG1, chloroplastic/mitochondrial of Oryza sativa subsp. indica (Rice).